Consider the following 359-residue polypeptide: Outer membrane protein assembly factor BamC (359 aa).

Residues 1–21 (MSTLNKYKTLIIISSLAAVSS) form the signal peptide. Cysteine 22 is lipidated: N-palmitoyl cysteine. Cysteine 22 carries S-diacylglycerol cysteine lipidation.

The protein belongs to the BamC family. As to quaternary structure, part of the Bam complex.

The protein resides in the cell outer membrane. Part of the outer membrane protein assembly complex, which is involved in assembly and insertion of beta-barrel proteins into the outer membrane. The protein is Outer membrane protein assembly factor BamC of Kangiella koreensis (strain DSM 16069 / JCM 12317 / KCTC 12182 / SW-125).